The chain runs to 463 residues: L-seryl-tRNA(Sec) selenium transferase (463 aa).

Residue Lys295 is modified to N6-(pyridoxal phosphate)lysine.

This sequence belongs to the SelA family. Homodecamer; pentamer of dimers. Binds only one seryl-tRNA(Sec) per dimer. The cofactor is pyridoxal 5'-phosphate.

Its subcellular location is the cytoplasm. The catalysed reaction is L-seryl-tRNA(Sec) + selenophosphate + H(+) = L-selenocysteinyl-tRNA(Sec) + phosphate. It participates in aminoacyl-tRNA biosynthesis; selenocysteinyl-tRNA(Sec) biosynthesis; selenocysteinyl-tRNA(Sec) from L-seryl-tRNA(Sec) (bacterial route): step 1/1. Functionally, converts seryl-tRNA(Sec) to selenocysteinyl-tRNA(Sec) required for selenoprotein biosynthesis. This Salmonella paratyphi A (strain AKU_12601) protein is L-seryl-tRNA(Sec) selenium transferase.